The sequence spans 250 residues: PF03932 family protein CutC (250 aa).

This sequence belongs to the CutC family.

It is found in the cytoplasm. The protein is PF03932 family protein CutC of Vibrio vulnificus (strain YJ016).